A 512-amino-acid polypeptide reads, in one-letter code: Cytochrome P450 monooxygenase TwmD (512 aa).

Cys454 is a heme binding site.

This sequence belongs to the cytochrome P450 family. It depends on heme as a cofactor.

It functions in the pathway secondary metabolite biosynthesis. Its function is as follows. Cytochrome P450 monooxygenase; part of the gene cluster that mediates the biosynthesis of wortmanamides A and B, reduced long-chain polyketides amidated with a specific omega-amino acid, 5-aminopentanoic acid (5PA). The PKS modules of TwmB are involved in the synthesis of the polyketide backbone, whereas the non-canonical C domain of TwmB is a bonafide condensation domain that specifically selects 5PA and catalyzes amidation to release polyketide chain. The C domain clearly prefers C16 and C18 fatty acyl substrates, which is consistent with simultaneous formation of both octaketide and nonaketide acyl amides wortmanamides A and B. Because TwmB lacks a designated enoylreductase (ER) domain, the required activity is provided the enoyl reductase TwmE. The roles of the remaining enzymes have still to be clarified. This chain is Cytochrome P450 monooxygenase TwmD, found in Talaromyces wortmannii (Penicillium wortmannii).